A 304-amino-acid chain; its full sequence is Protein ML (304 aa).

Its function is as follows. Blocks host IRF3 and IRF7, thereby inhibiting IFN-beta expression and activation of host antiviral state. The protein is Protein ML of Thogoto virus (isolate SiAr 126) (Tho).